The chain runs to 483 residues: Endoplasmic reticulum lectin 1 (483 aa).

The first 33 residues, 1–33, serve as a signal peptide directing secretion; the sequence is MEEGDGGLRSLVPGGPLLLVLYGLLEASGGGRA. MRH domains are found at residues 111 to 246 and 342 to 469; these read SSCS…LCSH and SYCF…ICKI. Cys113 and Cys126 are joined by a disulfide. Residue Asn195 is glycosylated (N-linked (GlcNAc...) asparagine). 5 disulfide bridges follow: Cys199/Cys232, Cys215/Cys244, Cys344/Cys357, Cys421/Cys455, and Cys436/Cys467.

As to quaternary structure, may form a complex with OS9, HSPA5, SYVN1, and SEL1L with which it interacts directly. Interacts (via PRKCSH 2 domain) with KREMEN2 (when glycosylated). Interacts with HSPA5. Post-translationally, N-glycosylated.

The protein resides in the endoplasmic reticulum lumen. Functionally, probable lectin that binds selectively to improperly folded lumenal proteins. May function in endoplasmic reticulum quality control and endoplasmic reticulum-associated degradation (ERAD) of both non-glycosylated proteins and glycoproteins. This is Endoplasmic reticulum lectin 1 (Erlec1) from Mus musculus (Mouse).